The primary structure comprises 55 residues: ATP synthase F(0) complex subunit 8 (55 aa).

Residues 4-24 traverse the membrane as a helical segment; the sequence is LNPAPWFAILVFSWLVFLTVI. The interval 36 to 55 is disordered; that stretch reads EPTSQSTEKTKPEPWNWPWH.

It belongs to the ATPase protein 8 family. Component of the ATP synthase complex composed at least of ATP5F1A/subunit alpha, ATP5F1B/subunit beta, ATP5MC1/subunit c (homooctomer), MT-ATP6/subunit a, MT-ATP8/subunit 8, ATP5ME/subunit e, ATP5MF/subunit f, ATP5MG/subunit g, ATP5MK/subunit k, ATP5MJ/subunit j, ATP5F1C/subunit gamma, ATP5F1D/subunit delta, ATP5F1E/subunit epsilon, ATP5PF/subunit F6, ATP5PB/subunit b, ATP5PD/subunit d, ATP5PO/subunit OSCP. ATP synthase complex consists of a soluble F(1) head domain (subunits alpha(3) and beta(3)) - the catalytic core - and a membrane F(0) domain - the membrane proton channel (subunits c, a, 8, e, f, g, k and j). These two domains are linked by a central stalk (subunits gamma, delta, and epsilon) rotating inside the F1 region and a stationary peripheral stalk (subunits F6, b, d, and OSCP).

The protein resides in the mitochondrion membrane. Functionally, subunit 8, of the mitochondrial membrane ATP synthase complex (F(1)F(0) ATP synthase or Complex V) that produces ATP from ADP in the presence of a proton gradient across the membrane which is generated by electron transport complexes of the respiratory chain. ATP synthase complex consist of a soluble F(1) head domain - the catalytic core - and a membrane F(1) domain - the membrane proton channel. These two domains are linked by a central stalk rotating inside the F(1) region and a stationary peripheral stalk. During catalysis, ATP synthesis in the catalytic domain of F(1) is coupled via a rotary mechanism of the central stalk subunits to proton translocation. In vivo, can only synthesize ATP although its ATP hydrolase activity can be activated artificially in vitro. Part of the complex F(0) domain. In Salvelinus alpinus (Arctic char), this protein is ATP synthase F(0) complex subunit 8.